The chain runs to 386 residues: MSVIKMTDLDLAGKRVFIRADLNVPVKDGKVTSDARIRATIPTLKLALEKGAKVMVTSHLGRPTEGEFKPEDSLQPVVDYLKNAGFNVRLEQDYLNGVDVKDGEIVVLENVRVNKGEKKNDPELGKKYAALCDVFVMDAFGTAHRAQASTYGVAEFAPIACAGPLLAAELDALGKALKEPARPMVAIVGGSKVSTKLEVLNSLSKIADQIIVGGGIANTFIAAAGHNVGKSLYEADLIPVAKELAANTDIPVPVDVRVGLEFSETAAATEKVVNEVKDDESIFDIGDKSAEQLAEIIKNAKTVLWNGPVGVFEFPHFRKGTEIISHAIANSDAFSIAGGGDTLAAIDLFGIADKISYISTGGGAFLEFVEGKVLPAVEILEKRAKN.

Residues 21 to 23, arginine 36, 59 to 62, arginine 112, and arginine 145 each bind substrate; these read DLN and HLGR. Residues lysine 196, glutamate 313, and 339 to 342 each bind ATP; that span reads GGDT.

The protein belongs to the phosphoglycerate kinase family. Monomer.

The protein localises to the cytoplasm. The catalysed reaction is (2R)-3-phosphoglycerate + ATP = (2R)-3-phospho-glyceroyl phosphate + ADP. It functions in the pathway carbohydrate degradation; glycolysis; pyruvate from D-glyceraldehyde 3-phosphate: step 2/5. This chain is Phosphoglycerate kinase (pgk), found in Haemophilus influenzae (strain ATCC 51907 / DSM 11121 / KW20 / Rd).